Reading from the N-terminus, the 550-residue chain is Selinene synthase (550 aa).

Mg(2+)-binding residues include aspartate 314, aspartate 318, aspartate 450, and glutamate 458. The DDXXD motif signature appears at 314–318 (DDIYD).

This sequence belongs to the terpene synthase family. Mg(2+) is required as a cofactor. The cofactor is Mn(2+).

The enzyme catalyses (2E,6E)-farnesyl diphosphate = (+)-beta-selinene + diphosphate. It carries out the reaction (2E,6E)-farnesyl diphosphate = alpha-selinene + diphosphate. Its pathway is secondary metabolite biosynthesis; terpenoid biosynthesis. Its function is as follows. Sesquiterpene synthase that catalyzes the formation of alpha- and beta-selinene from trans,trans-farnesyl diphosphate (FPP). Also produces some nerolidol. The chain is Selinene synthase (SES) from Ocimum basilicum (Sweet basil).